The sequence spans 274 residues: Large ribosomal subunit protein uL2 (274 aa).

Positions 221–274 are disordered; that stretch reads RGTAMNPVDHPHGGGEGRNFGKHPVTPWGVQTKGKKTRSNKRTDKFIVRRRSKK.

It belongs to the universal ribosomal protein uL2 family. As to quaternary structure, part of the 50S ribosomal subunit. Forms a bridge to the 30S subunit in the 70S ribosome.

Functionally, one of the primary rRNA binding proteins. Required for association of the 30S and 50S subunits to form the 70S ribosome, for tRNA binding and peptide bond formation. It has been suggested to have peptidyltransferase activity; this is somewhat controversial. Makes several contacts with the 16S rRNA in the 70S ribosome. In Yersinia enterocolitica, this protein is Large ribosomal subunit protein uL2.